Reading from the N-terminus, the 106-residue chain is Small ribosomal subunit protein bS18 (106 aa).

The disordered stretch occupies residues M1 to R41.

It belongs to the bacterial ribosomal protein bS18 family. As to quaternary structure, part of the 30S ribosomal subunit. Forms a tight heterodimer with protein bS6.

Functionally, binds as a heterodimer with protein bS6 to the central domain of the 16S rRNA, where it helps stabilize the platform of the 30S subunit. This is Small ribosomal subunit protein bS18 from Oenococcus oeni (strain ATCC BAA-331 / PSU-1).